A 200-amino-acid polypeptide reads, in one-letter code: FMN-dependent NADH:quinone oxidoreductase (200 aa).

FMN is bound by residues S10, 96–99, and 140–143; these read MYNF and SRGG.

Belongs to the azoreductase type 1 family. As to quaternary structure, homodimer. FMN is required as a cofactor.

It catalyses the reaction 2 a quinone + NADH + H(+) = 2 a 1,4-benzosemiquinone + NAD(+). It carries out the reaction N,N-dimethyl-1,4-phenylenediamine + anthranilate + 2 NAD(+) = 2-(4-dimethylaminophenyl)diazenylbenzoate + 2 NADH + 2 H(+). Functionally, quinone reductase that provides resistance to thiol-specific stress caused by electrophilic quinones. Also exhibits azoreductase activity. Catalyzes the reductive cleavage of the azo bond in aromatic azo compounds to the corresponding amines. In Photorhabdus laumondii subsp. laumondii (strain DSM 15139 / CIP 105565 / TT01) (Photorhabdus luminescens subsp. laumondii), this protein is FMN-dependent NADH:quinone oxidoreductase.